Consider the following 20-residue polypeptide: Protease inhibitor (20 aa).

As to quaternary structure, monomer. In terms of processing, glycosylated. In terms of tissue distribution, stored in epidermis and secreted into the hemolymph and cuticle. Not detected in the interior of the epidermis, fat body cells or columnar or goblet cells of the midgut epithelium (at protein level).

In terms of biological role, inhibits trypsin and chymotrypsin. This chain is Protease inhibitor, found in Antheraea mylitta (Tasar silkworm).